The following is a 728-amino-acid chain: Probable 3',5'-cyclic phosphodiesterase pde-5 (728 aa).

The GAF domain occupies 214-371 (SMDAVIIKVM…HHAKLYDKIR (158 aa)). The 320-residue stretch at 390–709 (CNADEVNKLK…KKWEELAEEQ (320 aa)) folds into the PDEase domain. Histidine 465 functions as the Proton donor in the catalytic mechanism. 4 residues coordinate a divalent metal cation: histidine 469, histidine 503, aspartate 504, and aspartate 614. The stretch at 691 to 728 (MRERCEYNAKKWEELAEEQRKKQEALAQQNGEANETQE) forms a coiled coil. Positions 708-728 (EQRKKQEALAQQNGEANETQE) are disordered. Positions 716–728 (LAQQNGEANETQE) are enriched in polar residues.

It belongs to the cyclic nucleotide phosphodiesterase family. The cofactor is a divalent metal cation.

The enzyme catalyses a nucleoside 3',5'-cyclic phosphate + H2O = a nucleoside 5'-phosphate + H(+). Redundantly with pde-1, plays a role in the AFD thermosensory neurons to regulate microvilli receptive ending morphology, possibly by regulating cGMP levels. This chain is Probable 3',5'-cyclic phosphodiesterase pde-5 (pde-5), found in Caenorhabditis elegans.